Consider the following 212-residue polypeptide: Orotate phosphoribosyltransferase (212 aa).

Lysine 26 serves as a coordination point for 5-phospho-alpha-D-ribose 1-diphosphate. 34-35 (FF) contributes to the orotate binding site. Residues 72 to 73 (YK), arginine 98, lysine 99, lysine 102, histidine 104, and 123 to 131 (DDVISAGTS) each bind 5-phospho-alpha-D-ribose 1-diphosphate. Orotate contacts are provided by serine 127 and arginine 155.

The protein belongs to the purine/pyrimidine phosphoribosyltransferase family. PyrE subfamily. As to quaternary structure, homodimer. It depends on Mg(2+) as a cofactor.

The enzyme catalyses orotidine 5'-phosphate + diphosphate = orotate + 5-phospho-alpha-D-ribose 1-diphosphate. Its pathway is pyrimidine metabolism; UMP biosynthesis via de novo pathway; UMP from orotate: step 1/2. Functionally, catalyzes the transfer of a ribosyl phosphate group from 5-phosphoribose 1-diphosphate to orotate, leading to the formation of orotidine monophosphate (OMP). This chain is Orotate phosphoribosyltransferase, found in Thiobacillus denitrificans (strain ATCC 25259 / T1).